The sequence spans 519 residues: Maturase K (519 aa).

The protein belongs to the intron maturase 2 family. MatK subfamily.

The protein localises to the plastid. The protein resides in the chloroplast. Functionally, usually encoded in the trnK tRNA gene intron. Probably assists in splicing its own and other chloroplast group II introns. This chain is Maturase K, found in Keteleeria davidiana (David's keteleeria).